Consider the following 545-residue polypeptide: CTP synthase (545 aa).

Positions 1–266 (MTTNYIFVTG…DDYICKRFSL (266 aa)) are amidoligase domain. A CTP-binding site is contributed by serine 14. UTP is bound at residue serine 14. Residues 15-20 (SLGKGI) and aspartate 72 contribute to the ATP site. Residues aspartate 72 and glutamate 140 each coordinate Mg(2+). CTP-binding positions include 147–149 (DIE), 187–192 (KTKPTQ), and lysine 223. UTP contacts are provided by residues 187–192 (KTKPTQ) and lysine 223. 239 to 241 (KDV) is an ATP binding site. The Glutamine amidotransferase type-1 domain maps to 291 to 542 (TIGMVGKYIE…VKAASEYQKR (252 aa)). Glycine 352 contributes to the L-glutamine binding site. Residue cysteine 379 is the Nucleophile; for glutamine hydrolysis of the active site. Residues 380–383 (LGMQ), glutamate 403, and arginine 470 contribute to the L-glutamine site. Residues histidine 515 and glutamate 517 contribute to the active site.

The protein belongs to the CTP synthase family. Homotetramer.

It catalyses the reaction UTP + L-glutamine + ATP + H2O = CTP + L-glutamate + ADP + phosphate + 2 H(+). The enzyme catalyses L-glutamine + H2O = L-glutamate + NH4(+). It carries out the reaction UTP + NH4(+) + ATP = CTP + ADP + phosphate + 2 H(+). The protein operates within pyrimidine metabolism; CTP biosynthesis via de novo pathway; CTP from UDP: step 2/2. With respect to regulation, allosterically activated by GTP, when glutamine is the substrate; GTP has no effect on the reaction when ammonia is the substrate. The allosteric effector GTP functions by stabilizing the protein conformation that binds the tetrahedral intermediate(s) formed during glutamine hydrolysis. Inhibited by the product CTP, via allosteric rather than competitive inhibition. In terms of biological role, catalyzes the ATP-dependent amination of UTP to CTP with either L-glutamine or ammonia as the source of nitrogen. Regulates intracellular CTP levels through interactions with the four ribonucleotide triphosphates. The polypeptide is CTP synthase (Citrobacter koseri (strain ATCC BAA-895 / CDC 4225-83 / SGSC4696)).